Here is a 194-residue protein sequence, read N- to C-terminus: dCTP deaminase (194 aa).

DCTP-binding positions include 110–115 (RSSLAR), Asp128, 136–138 (VLE), Tyr171, Lys178, and Gln182. Glu138 functions as the Proton donor/acceptor in the catalytic mechanism.

This sequence belongs to the dCTP deaminase family. As to quaternary structure, homotrimer.

It carries out the reaction dCTP + H2O + H(+) = dUTP + NH4(+). It participates in pyrimidine metabolism; dUMP biosynthesis; dUMP from dCTP (dUTP route): step 1/2. Its function is as follows. Catalyzes the deamination of dCTP to dUTP. This Pasteurella multocida (strain Pm70) protein is dCTP deaminase.